Consider the following 372-residue polypeptide: Alanine dehydrogenase 2 (372 aa).

Histidine 95 is a catalytic residue. Residue lysine 169–asparagine 199 participates in NAD(+) binding.

This sequence belongs to the AlaDH/PNT family.

It catalyses the reaction L-alanine + NAD(+) + H2O = pyruvate + NH4(+) + NADH + H(+). It participates in amino-acid degradation; L-alanine degradation via dehydrogenase pathway; NH(3) and pyruvate from L-alanine: step 1/1. Its function is as follows. May play a role in cell wall synthesis as L-alanine is an important constituent of the peptidoglycan layer. This Staphylococcus aureus (strain MRSA252) protein is Alanine dehydrogenase 2 (ald2).